Reading from the N-terminus, the 305-residue chain is DNA-directed RNA polymerase 35 kDa subunit (305 aa).

The protein belongs to the poxviridae DNA-directed RNA polymerase 35 kDa subunit family. The DNA-dependent RNA polymerase used for intermediate and late genes expression consists of eight subunits 147 kDa, 133 kDa, 35 kDa, 30 kDa, 22 kDa, 19 kDa, 18 kDa and 7 kDa totalling more than 500 kDa in mass. The same holoenzyme, with the addition of the transcription-specificity factor RAP94, is used for early gene expression.

It localises to the virion. The enzyme catalyses RNA(n) + a ribonucleoside 5'-triphosphate = RNA(n+1) + diphosphate. Functionally, part of the DNA-dependent RNA polymerase which catalyzes the transcription of viral DNA into RNA using the four ribonucleoside triphosphates as substrates. Responsible for the transcription of early, intermediate and late genes. DNA-dependent RNA polymerase associates with the early transcription factor (ETF), itself composed of D6 and A7, thereby allowing the early genes transcription. Late transcription, and probably also intermediate transcription, require newly synthesized RNA polymerase. The chain is DNA-directed RNA polymerase 35 kDa subunit (OPG156) from Variola virus (isolate Human/India/Ind3/1967) (VARV).